The sequence spans 63 residues: Cytochrome c oxidase subunit 5C (63 aa).

A helical transmembrane segment spans residues 16–34 (VVKEICIGLTLGLVAGGLW).

It belongs to the cytochrome c oxidase subunit 5C family.

The protein resides in the mitochondrion inner membrane. Its function is as follows. This protein is one of the nuclear-coded polypeptide chains of cytochrome c oxidase, the terminal oxidase in mitochondrial electron transport. The sequence is that of Cytochrome c oxidase subunit 5C (COX5C) from Oryza sativa subsp. japonica (Rice).